The sequence spans 310 residues: Protein RL1 (310 aa).

Over residues 1-12 (MPATDTNSTHTT) the composition is skewed to polar residues. The interval 1-44 (MPATDTNSTHTTPLHPEDQHTLPLHHSTTQPHVQTSDKHADKQH) is disordered. Positions 35–44 (TSDKHADKQH) are enriched in basic and acidic residues. The segment at 153–159 (LLLARQR) is involved in the interaction with host DDB1. Positions 205 to 252 (ERPSAGEAQARGLLPRIRITPISTSPRPKPPQPTTSTASHPHATARPD) are disordered. Low complexity predominate over residues 238–248 (TTSTASHPHAT).

This sequence belongs to the HHV-5 HKLF1 family. In terms of assembly, interacts with host adaptor protein DDB1; this interaction allows RL1 to recruit the cullin4-RING E3 ubiquitin ligase (CRL4) complex and promote SLN11 degradation.

Functionally, degrades the host antiviral factor SLFN11 via the cullin4-RING E3 ubiquitin ligase (CRL4) complex. This chain is Protein RL1 (RL1), found in Human cytomegalovirus (strain Merlin) (HHV-5).